A 542-amino-acid polypeptide reads, in one-letter code: Formate--tetrahydrofolate ligase (542 aa).

Residue 53 to 60 participates in ATP binding; it reads TPAGEGKT.

Belongs to the formate--tetrahydrofolate ligase family.

It carries out the reaction (6S)-5,6,7,8-tetrahydrofolate + formate + ATP = (6R)-10-formyltetrahydrofolate + ADP + phosphate. It participates in one-carbon metabolism; tetrahydrofolate interconversion. The sequence is that of Formate--tetrahydrofolate ligase from Thermotoga petrophila (strain ATCC BAA-488 / DSM 13995 / JCM 10881 / RKU-1).